Here is a 273-residue protein sequence, read N- to C-terminus: Putative peptidyl-prolyl cis-trans isomerase Cbf2 (273 aa).

The signal sequence occupies residues 1-21 (MKKFSLVAATLIAGVVLNVNA). Residues 131 to 228 (PARVQAKHIL…FGYHVILKEN (98 aa)) form the PpiC domain.

The catalysed reaction is [protein]-peptidylproline (omega=180) = [protein]-peptidylproline (omega=0). The protein is Putative peptidyl-prolyl cis-trans isomerase Cbf2 (cbf2) of Campylobacter jejuni subsp. jejuni serotype O:2 (strain ATCC 700819 / NCTC 11168).